A 504-amino-acid polypeptide reads, in one-letter code: Maturase K (504 aa).

This sequence belongs to the intron maturase 2 family. MatK subfamily.

The protein resides in the plastid. It is found in the chloroplast. Usually encoded in the trnK tRNA gene intron. Probably assists in splicing its own and other chloroplast group II introns. This chain is Maturase K, found in Nepenthes alata (Winged pitcher plant).